The sequence spans 318 residues: Glycine--tRNA ligase alpha subunit (318 aa).

The disordered stretch occupies residues 298–318; sequence EAGGSSPSTSRQGEAPRGESQ. Polar residues predominate over residues 300-309; the sequence is GGSSPSTSRQ.

The protein belongs to the class-II aminoacyl-tRNA synthetase family. As to quaternary structure, tetramer of two alpha and two beta subunits.

It localises to the cytoplasm. The catalysed reaction is tRNA(Gly) + glycine + ATP = glycyl-tRNA(Gly) + AMP + diphosphate. This is Glycine--tRNA ligase alpha subunit from Rhodopseudomonas palustris (strain BisB18).